The primary structure comprises 240 residues: Tetrahydromethanopterin S-methyltransferase subunit A (240 aa).

Topologically, residues methionine 1–lysine 218 are cytoplasmic. A 5-hydroxybenzimidazolylcob(I)amide-binding site is contributed by histidine 85. Residues isoleucine 219–glycine 239 traverse the membrane as a helical segment. Arginine 240 is a topological domain (extracellular).

The protein belongs to the MtrA family. The complex is composed of 8 subunits; MtrA, MtrB, MtrC, MtrD, MtrE, MtrF, MtrG and MtrH. It depends on 5-hydroxybenzimidazolylcob(I)amide as a cofactor.

It is found in the cell membrane. It carries out the reaction 5-methyl-5,6,7,8-tetrahydromethanopterin + coenzyme M + 2 Na(+)(in) = 5,6,7,8-tetrahydromethanopterin + methyl-coenzyme M + 2 Na(+)(out). Its pathway is one-carbon metabolism; methanogenesis from CO(2); methyl-coenzyme M from 5,10-methylene-5,6,7,8-tetrahydromethanopterin: step 2/2. Functionally, part of a complex that catalyzes the formation of methyl-coenzyme M and tetrahydromethanopterin from coenzyme M and methyl-tetrahydromethanopterin. This is an energy-conserving, sodium-ion translocating step. The polypeptide is Tetrahydromethanopterin S-methyltransferase subunit A (Methanosarcina acetivorans (strain ATCC 35395 / DSM 2834 / JCM 12185 / C2A)).